A 451-amino-acid chain; its full sequence is Lipase member H (451 aa).

An N-terminal signal peptide occupies residues 1–16 (MLRLCFLLSFMCLVKS). The N-linked (GlcNAc...) asparagine glycan is linked to asparagine 66. The Nucleophile role is filled by serine 154. Aspartate 178 acts as the Charge relay system in catalysis. Cysteine 233 and cysteine 246 form a disulfide bridge. Histidine 248 serves as the catalytic Charge relay system. Intrachain disulfides connect cysteine 270-cysteine 281, cysteine 284-cysteine 292, and cysteine 427-cysteine 446.

The protein belongs to the AB hydrolase superfamily. Lipase family. Interacts with TTMP/C3orf52.

It is found in the secreted. The protein resides in the cell membrane. It catalyses the reaction 1-hexadecanoyl-2-(9Z-octadecenoyl)-sn-glycero-3-phosphate + H2O = 2-(9Z-octadecenoyl)-sn-glycero-3-phosphate + hexadecanoate + H(+). In terms of biological role, hydrolyzes specifically phosphatidic acid (PA) to produce 2-acyl lysophosphatidic acid (LPA; a potent bioactive lipid mediator) and fatty acid. Does not hydrolyze other phospholipids, like phosphatidylserine (PS), phosphatidylcholine (PC) and phosphatidylethanolamine (PE) or triacylglycerol (TG). This chain is Lipase member H (Liph), found in Rattus norvegicus (Rat).